A 373-amino-acid polypeptide reads, in one-letter code: 3-dehydroquinate synthase (373 aa).

Residues 120–124, 144–145, Lys157, Lys166, and 184–187 each bind NAD(+); these read GVVGD, TT, and FLKT. Zn(2+) is bound by residues Glu199, His262, and His278.

It belongs to the sugar phosphate cyclases superfamily. Dehydroquinate synthase family. It depends on NAD(+) as a cofactor. Co(2+) serves as cofactor. Zn(2+) is required as a cofactor.

It is found in the cytoplasm. The enzyme catalyses 7-phospho-2-dehydro-3-deoxy-D-arabino-heptonate = 3-dehydroquinate + phosphate. The protein operates within metabolic intermediate biosynthesis; chorismate biosynthesis; chorismate from D-erythrose 4-phosphate and phosphoenolpyruvate: step 2/7. Functionally, catalyzes the conversion of 3-deoxy-D-arabino-heptulosonate 7-phosphate (DAHP) to dehydroquinate (DHQ). In Clostridium tetani (strain Massachusetts / E88), this protein is 3-dehydroquinate synthase.